Reading from the N-terminus, the 332-residue chain is Super small secreted glycoprotein (332 aa).

A signal peptide spans Met-1 to Ser-33. N-linked (GlcNAc...) asparagine; by host glycosylation is present at Asn-41. Intrachain disulfides connect Cys-109/Cys-136 and Cys-122/Cys-148. N-linked (GlcNAc...) asparagine; by host glycosylation is found at Asn-205, Asn-229, Asn-239, Asn-258, and Asn-269.

This sequence belongs to the filoviruses glycoprotein family.

The protein resides in the secreted. The chain is Super small secreted glycoprotein (GP) from Reston ebolavirus (strain Reston-89) (REBOV).